Here is a 297-residue protein sequence, read N- to C-terminus: Putative thiosulfate sulfurtransferase SseA (297 aa).

Rhodanese domains lie at 31–138 (GAPG…ETTL) and 168–286 (ILDA…VPIV). Catalysis depends on C245, which acts as the Cysteine persulfide intermediate. R250 lines the substrate pocket.

The enzyme catalyses thiosulfate + hydrogen cyanide = thiocyanate + sulfite + 2 H(+). The protein is Putative thiosulfate sulfurtransferase SseA (sseA) of Mycobacterium bovis (strain ATCC BAA-935 / AF2122/97).